The sequence spans 369 residues: uncharacterized protein (369 aa).

Residues 110 to 121 (ARPTDAFGAPIA) show a composition bias toward low complexity. The interval 110 to 172 (ARPTDAFGAP…PPPPASGGGA (63 aa)) is disordered. Residues 122–136 (PSEPTPASAPSPPKA) are compositionally biased toward pro residues.

This is an uncharacterized protein from Lymantria dispar multicapsid nuclear polyhedrosis virus (LdMNPV).